The sequence spans 310 residues: ADP-L-glycero-D-manno-heptose-6-epimerase (310 aa).

NADP(+) contacts are provided by residues 10 to 11, 31 to 32, Lys-38, Lys-53, 75 to 79, and Asn-92; these read FI, DN, and EGACS. Residue Tyr-140 is the Proton acceptor of the active site. Position 144 (Lys-144) interacts with NADP(+). Asn-169 contributes to the substrate binding site. Val-170 and Lys-178 together coordinate NADP(+). Lys-178 acts as the Proton acceptor in catalysis. Substrate-binding positions include Ser-180, His-187, 201-204, Arg-209, and Tyr-272; that span reads FEGS.

This sequence belongs to the NAD(P)-dependent epimerase/dehydratase family. HldD subfamily. Homopentamer. It depends on NADP(+) as a cofactor.

It catalyses the reaction ADP-D-glycero-beta-D-manno-heptose = ADP-L-glycero-beta-D-manno-heptose. Its pathway is nucleotide-sugar biosynthesis; ADP-L-glycero-beta-D-manno-heptose biosynthesis; ADP-L-glycero-beta-D-manno-heptose from D-glycero-beta-D-manno-heptose 7-phosphate: step 4/4. Functionally, catalyzes the interconversion between ADP-D-glycero-beta-D-manno-heptose and ADP-L-glycero-beta-D-manno-heptose via an epimerization at carbon 6 of the heptose. This is ADP-L-glycero-D-manno-heptose-6-epimerase from Klebsiella pneumoniae (strain 342).